The primary structure comprises 555 residues: Wee1-like protein kinase 2 (555 aa).

The interval 1–112 is disordered; it reads MADTETDQGL…NFSTPKNSLG (112 aa). Serine 15 carries the phosphoserine; by CaMK2 and PKA modification. The span at 26–41 shows a compositional bias: polar residues; it reads EGQMTAQDIGGAQSQK. Basic and acidic residues predominate over residues 57 to 72; it reads TRDELHTSLSRDKESP. Position 71 is a phosphoserine (serine 71). Residues 102 to 112 show a composition bias toward polar residues; sequence TNFSTPKNSLG. Positions 167 to 169 match the Nuclear localization signal motif; that stretch reads KRK. Positions 208–485 constitute a Protein kinase domain; the sequence is FFEIEKIGVG…ARSRILWPFL (278 aa). Residues 214 to 222 and lysine 237 contribute to the ATP site; that span reads IGVGEFGTV. The Nuclear export signal signature appears at 310–324; the sequence is KLKDILLQISLGLKY. The active-site Proton acceptor is the aspartate 334. Positions 339 and 375 each coordinate Mg(2+). The stretch at 488 to 514 forms a coiled coil; it reads TDELQKQLNLEKSKTATLKRELKKARH.

The protein belongs to the protein kinase superfamily. Ser/Thr protein kinase family. WEE1 subfamily. Post-translationally, phosphorylated by PKA at Ser-15 in vitro, leading to activate kinase activity. Phosphorylation at Ser-15 by CaMK2, leading to increase its activity and promote metaphase II exit during egg activation. As to expression, ovary-specific.

The protein resides in the cytoplasm. The protein localises to the nucleus. The enzyme catalyses L-tyrosyl-[protein] + ATP = O-phospho-L-tyrosyl-[protein] + ADP + H(+). In terms of biological role, oocyte-specific protein tyrosine kinase that phosphorylates and inhibits CDK1 and acts as a key regulator of meiosis during both prophase I and metaphase II. Required to maintain meiotic arrest in oocytes during the germinal vesicle (GV) stage, a long period of quiescence at dictyate prophase I, by phosphorylating CDK1 at 'Tyr-15', leading to inhibit CDK1 activity and prevent meiotic reentry. Also required for metaphase II exit during egg activation by phosphorylating CDK1 at 'Tyr-15', to ensure exit from meiosis in oocytes and promote pronuclear formation. This Mus musculus (Mouse) protein is Wee1-like protein kinase 2 (Wee2).